A 479-amino-acid polypeptide reads, in one-letter code: U2 small nuclear ribonucleoprotein auxiliary factor 35 kDa subunit-related protein 1 (479 aa).

The disordered stretch occupies residues 1–63 (MAALEKMTFP…EDTFIEEQQL (63 aa)). Over residues 20 to 37 (SHKKYRAALKKEKRKKRR) the composition is skewed to basic residues. Residues 50-63 (QEEEEDTFIEEQQL) are compositionally biased toward acidic residues. Residue K67 forms a Glycyl lysine isopeptide (Lys-Gly) (interchain with G-Cter in SUMO2) linkage. The C3H1-type 1 zinc finger occupies 171–199 (EKDRANCPFYSKTGACRFGDRCSRKHNFP). An RRM domain is found at 203–309 (PTLLIKSMFT…RQLQCEFCPV (107 aa)). Residues 311–338 (RWKMAICGLFEIQQCPRGKHCNFLHVFR) form a C3H1-type 2 zinc finger. Position 354 is a phosphoserine (S354). The segment at 356–479 (DQTGSSFGKN…DRTVQSPQSK (124 aa)) is disordered. Composition is skewed to basic and acidic residues over residues 365–379 (NSER…DHYY) and 388–403 (PSPD…SERK). A Phosphoserine modification is found at S389. Composition is skewed to basic residues over residues 404-417 (KSSH…KRTS) and 442-451 (SQSRRSHRSR).

It localises to the nucleus. The polypeptide is U2 small nuclear ribonucleoprotein auxiliary factor 35 kDa subunit-related protein 1 (Homo sapiens (Human)).